The following is a 1198-amino-acid chain: MTKKPGGPGKNRAINMLKRGLPRVFPLVGVKRVVMSLLDGRGPVRFVLALITFFKFTALAPTKALLGRWRAVEKSVAMKHLTSFKRELGTLIDAVNKRGKKQNKRGGNESSIMWLASLAIVIACAGAMKLSNFQGKLLMTINNTDIADVIVIPTSKGENRCWVRAIDVGYMCEDTITYECPKLAVGNDPEDVDCWCDNQEVYVQYGRCTRTRHSKRSRRSVSVQTHGESSLVNKKEAWLDSTKATRYLMKTENWIIRNPGYAFLAAALGWMLGSNSGQRVVFTILLLLVAPAYSFNCLGMGNRDFIEGASGATWVDLVLEGDSCLTIMANDKPTLDVRMINIEASQLAEVRSYCYHASVTDISTVARCPTTGEAHNEKRADSSYVCKQGFTDRGWGNGCGLFGKGSIDTCAKFSCTSKAIGRTIQPENIKYEVGVFVHGTTTSENHGNYSAQVGASQAAKFTVTPNAPSITLKLGDYGEVTLDCEPRSGLNTEAFYVMTVGSKSFLVHREWFHDLSLPWTSPSSTAWRNRELLMEFEEAHATKQSVVALGSQEGGLHQALAGAIVVEYSSSVKLTSGHLKCRLKMDKLALKGTTYGMCTEKFSFAKNPADTGHGTVVIELTYSGSDGPCKIPIVSVASLNDMTPVGRLVTVNPFVATSSSNSKVLVEMEPPFGDSYIVVGRGDKQINHHWYKAGSTLGKAFSTTLKGAQRLAALGDTAWDFGSIGGVFNSIGKAVHQVFGGAFRTLFGGMSWITQGLMGALLLWMGVNARDRSIALAFLATGGVLVFLATNVHADTGCAIDITRKEMRCGSGIFVHNDVEAWVDRYKYLPETPRSLAKIVHKAHQEGVCGVRSVTRLEHQMWESVRDELNVLLKENAVDLSVVVNKPVGRYRSAPKRLSMTQEKFEMGWKAWGKSILFAPELANSTFVVDGPETKECPDERRAWNSMQIEDFGFGITSTRVWLKIREENTDECDGAIIGTAVKGHVAVHSDLSYWIESRLNDTWKLERAVFGEVKSCTWPETHTLWGDGVEESELIIPHTIAGPRSKHNRREGYKTQNQGPWDENGIVLDFDYCPGTKVTITEDCGKRGPSIRTTTDSGKLITDWCCRSCSLPPLRFRTENGCWYGMEIRPVRHDETTLVRSQVDAFNGEMIDPFSAGPSGDVSGHPGGPSQEVDGQIDDSCGFGGPTCADAWGHHLH.

The tract at residues 2–15 is interaction with host EXOC1; sequence TKKPGGPGKNRAIN. The segment at 37-72 is hydrophobic; homodimerization of capsid protein C; that stretch reads LLDGRGPVRFVLALITFFKFTALAPTKALLGRWRAV. Residues 106–127 constitute a propeptide, ER anchor for the capsid protein C, removed in mature form by serine protease NS3; it reads GGNESSIMWLASLAIVIACAGA. A helical membrane pass occupies residues 110–130; that stretch reads SSIMWLASLAIVIACAGAMKL. Asparagine 142 is a glycosylation site (N-linked (GlcNAc...) asparagine; by host). The next 2 helical transmembrane spans lie at 254–274 and 280–294; these read WIIR…MLGS and VVFT…PAYS. 6 disulfide bridges follow: cysteine 297–cysteine 324, cysteine 354–cysteine 410, cysteine 354–cysteine 415, cysteine 368–cysteine 399, cysteine 386–cysteine 410, and cysteine 386–cysteine 415. Residues 392 to 405 form a fusion peptide region; that stretch reads DRGWGNGCGLFGKG. N-linked (GlcNAc...) asparagine; by host glycosylation occurs at asparagine 448. 2 disulfides stabilise this stretch: cysteine 484–cysteine 581 and cysteine 598–cysteine 629. Transmembrane regions (helical) follow at residues 747 to 767 and 774 to 794; these read FGGM…WMGV and IALA…NVHA. 6 cysteine pairs are disulfide-bonded: cysteine 798–cysteine 809, cysteine 849–cysteine 937, cysteine 973–cysteine 1017, cysteine 1074–cysteine 1123, cysteine 1085–cysteine 1106, and cysteine 1107–cysteine 1110. N-linked (GlcNAc...) asparagine; by host glycosylation is found at asparagine 924 and asparagine 1001. The tract at residues 1151-1178 is disordered; sequence MIDPFSAGPSGDVSGHPGGPSQEVDGQI.

Homodimer. Interacts (via N-terminus) with host EXOC1 (via C-terminus); this interaction results in EXOC1 degradation through the proteasome degradation pathway. Interacts with host CAPRIN1; this interaction is involved in the suppression of the integrated stress response. In terms of assembly, forms heterodimers with envelope protein E in the endoplasmic reticulum and Golgi. As to quaternary structure, homodimer; in the endoplasmic reticulum and Golgi. Interacts with protein prM. Interacts with non-structural protein 1. In terms of processing, genome polyprotein: Specific enzymatic cleavages in vivo yield mature proteins. Cleavages in the lumen of endoplasmic reticulum are performed by host signal peptidase, whereas cleavages in the cytoplasmic side are performed by serine protease NS3. Signal cleavage at the 2K-4B site requires a prior NS3 protease-mediated cleavage at the 4A-2K site. Post-translationally, cleaved in post-Golgi vesicles by a host furin, releasing the mature small envelope protein M, and peptide pr. This cleavage is incomplete as up to 30% of viral particles still carry uncleaved prM. N-glycosylated.

Its subcellular location is the secreted. The protein localises to the virion membrane. It is found in the host endoplasmic reticulum membrane. Plays a role in virus budding by binding to the cell membrane and gathering the viral RNA into a nucleocapsid that forms the core of a mature virus particle. During virus entry, may induce genome penetration into the host cytoplasm after hemifusion induced by the surface proteins. Can migrate to the cell nucleus where it modulates host functions. Overcomes the anti-viral effects of host EXOC1 by sequestering and degrading the latter through the proteasome degradation pathway. Inhibits the integrated stress response (ISR) in the infected cell by binding to host CAPRIN1. Its function is as follows. Inhibits RNA silencing by interfering with host Dicer. Functionally, prevents premature fusion activity of envelope proteins in trans-Golgi by binding to envelope protein E at pH6.0. After virion release in extracellular space, gets dissociated from E dimers. In terms of biological role, acts as a chaperone for envelope protein E during intracellular virion assembly by masking and inactivating envelope protein E fusion peptide. prM is the only viral peptide matured by host furin in the trans-Golgi network probably to avoid catastrophic activation of the viral fusion activity in acidic Golgi compartment prior to virion release. prM-E cleavage is inefficient, and many virions are only partially matured. These uncleaved prM would play a role in immune evasion. May play a role in virus budding. Exerts cytotoxic effects by activating a mitochondrial apoptotic pathway through M ectodomain. May display a viroporin activity. Its function is as follows. Binds to host cell surface receptor and mediates fusion between viral and cellular membranes. Envelope protein is synthesized in the endoplasmic reticulum in the form of heterodimer with protein prM. They play a role in virion budding in the ER, and the newly formed immature particle is covered with 60 spikes composed of heterodimer between precursor prM and envelope protein E. The virion is transported to the Golgi apparatus where the low pH causes dissociation of PrM-E heterodimers and formation of E homodimers. prM-E cleavage is inefficient, and many virions are only partially matured. These uncleaved prM would play a role in immune evasion. The protein is Structural polyprotein of Ardeidae (herons).